The sequence spans 118 residues: Small ribosomal subunit protein uS13 (118 aa).

The segment at 94 to 118 is disordered; sequence SLPLRGQRTKTNARTRKGPRKPIKK.

It belongs to the universal ribosomal protein uS13 family. In terms of assembly, part of the 30S ribosomal subunit. Forms a loose heterodimer with protein S19. Forms two bridges to the 50S subunit in the 70S ribosome.

Its function is as follows. Located at the top of the head of the 30S subunit, it contacts several helices of the 16S rRNA. In the 70S ribosome it contacts the 23S rRNA (bridge B1a) and protein L5 of the 50S subunit (bridge B1b), connecting the 2 subunits; these bridges are implicated in subunit movement. Contacts the tRNAs in the A and P-sites. This Shewanella oneidensis (strain ATCC 700550 / JCM 31522 / CIP 106686 / LMG 19005 / NCIMB 14063 / MR-1) protein is Small ribosomal subunit protein uS13.